The primary structure comprises 183 residues: Potassium-transporting ATPase KdpC subunit (183 aa).

The helical transmembrane segment at 11 to 31 (LILLLAVVTGALYPLAVTGVA) threads the bilayer.

The protein belongs to the KdpC family. The system is composed of three essential subunits: KdpA, KdpB and KdpC.

The protein localises to the cell inner membrane. Functionally, part of the high-affinity ATP-driven potassium transport (or Kdp) system, which catalyzes the hydrolysis of ATP coupled with the electrogenic transport of potassium into the cytoplasm. This subunit acts as a catalytic chaperone that increases the ATP-binding affinity of the ATP-hydrolyzing subunit KdpB by the formation of a transient KdpB/KdpC/ATP ternary complex. In Pseudomonas putida (strain W619), this protein is Potassium-transporting ATPase KdpC subunit.